The following is a 346-amino-acid chain: Tubulin-specific chaperone C (346 aa).

Position 1 is an N-acetylmethionine (Met1). A disordered region spans residues 1-26 (MESVSCSAAAVRTGDMESQRDLSLVP). Ser80 and Ser168 each carry phosphoserine. Positions 140–171 (KTRGKDAASSTKVDAAPGIPPAVESIQDSPLP) are disordered. Residues 171 to 323 (PKKAEGDLGP…NWNDVDDFNW (153 aa)) form the C-CAP/cofactor C-like domain.

The protein belongs to the TBCC family. As to quaternary structure, supercomplex made of cofactors A to E. Cofactors A and D function by capturing and stabilizing tubulin in a quasi-native conformation. Cofactor E binds to the cofactor D-tubulin complex; interaction with cofactor C then causes the release of tubulin polypeptides that are committed to the native state. Expressed in the retina. Expressed in the rod and cone photoreceptors, extending from the inner segments (IS), through the outer nuclear layer (ONL) and into the synapses in the outer plexiform layer (OPL). Strongly expressed to the photoreceptor connecting cilium at the tips of the IS (at protein level).

The protein localises to the cytoplasm. In terms of biological role, tubulin-folding protein; involved in the final step of the tubulin folding pathway. The chain is Tubulin-specific chaperone C (TBCC) from Homo sapiens (Human).